A 173-amino-acid polypeptide reads, in one-letter code: Large ribosomal subunit protein uL22c (173 aa).

Belongs to the universal ribosomal protein uL22 family. In terms of assembly, part of the 50S ribosomal subunit.

It is found in the plastid. The protein resides in the chloroplast. Its function is as follows. This protein binds specifically to 23S rRNA. In terms of biological role, the globular domain of the protein is located near the polypeptide exit tunnel on the outside of the subunit, while an extended beta-hairpin is found that lines the wall of the exit tunnel in the center of the 70S ribosome. This Drimys granadensis protein is Large ribosomal subunit protein uL22c (rpl22).